A 506-amino-acid polypeptide reads, in one-letter code: UBX domain-containing protein 4 (506 aa).

The tract at residues 1-199 (MLWFQGAIPA…PAEDLTVRVE (199 aa)) is interaction with UBQLN1. The Cytoplasmic segment spans residues 1–411 (MLWFQGAIPA…VHSSSGDIWT (411 aa)). The tract at residues 110 to 194 (QQMHSSKGEA…CSNQRPAEDL (85 aa)) is disordered. Composition is skewed to polar residues over residues 120-136 (SVTNDNQSESSVSTPSA) and 153-167 (LCETPATSDIKSDTA). The region spanning 313–391 (DRSTIARIQF…ELAPSASVVL (79 aa)) is the UBX domain. An intramembrane segment occupies 412–432 (LLGTVLYPFLAIWRLISNFLF). The Cytoplasmic portion of the chain corresponds to 433-506 (SNPPPAQTSA…TWNGNSTQQM (74 aa)). Residues 437–506 (PAQTSARATS…TWNGNSTQQM (70 aa)) are disordered. The span at 444–456 (ATSTEPSNSASSS) shows a compositional bias: low complexity. The segment covering 457-489 (KSEKREPVRKRMLEKRGEDFKKEGKIYRLRTQD) has biased composition (basic and acidic residues). Phosphothreonine is present on threonine 487. Positions 496–506 (NTWNGNSTQQM) are enriched in polar residues.

As to quaternary structure, directly interacts with VCP. Interacts with UBQLN1. Forms a complex with VCP and UBQLN1. As to expression, expressed in many tissues, including brain, heart, kidney, liver, muscle and spleen (at protein level).

The protein resides in the endoplasmic reticulum membrane. The protein localises to the nucleus envelope. In terms of biological role, involved in endoplasmic reticulum-associated protein degradation (ERAD). Acts as a platform to recruit both UBQLN1 and VCP to the ER during ERAD. This Mus musculus (Mouse) protein is UBX domain-containing protein 4 (Ubxn4).